The sequence spans 946 residues: Protein translocase subunit SecA (946 aa).

ATP-binding positions include Q87, 105–109 (GEGKT), and D524. 2 disordered regions span residues 872 to 892 (PEQPRELPPMEVHKMDPNTGE) and 904 to 946 (PADT…GRYA). Residues 907-917 (TVEKSERDPNR) are compositionally biased toward basic and acidic residues. Zn(2+)-binding residues include C930, C932, C941, and H942. Basic residues predominate over residues 936–946 (KKYKHCHGRYA).

Belongs to the SecA family. In terms of assembly, monomer and homodimer. Part of the essential Sec protein translocation apparatus which comprises SecA, SecYEG and auxiliary proteins SecDF-YajC and YidC. The cofactor is Zn(2+).

The protein resides in the cell inner membrane. It localises to the cytoplasm. It carries out the reaction ATP + H2O + cellular proteinSide 1 = ADP + phosphate + cellular proteinSide 2.. Functionally, part of the Sec protein translocase complex. Interacts with the SecYEG preprotein conducting channel. Has a central role in coupling the hydrolysis of ATP to the transfer of proteins into and across the cell membrane, serving both as a receptor for the preprotein-SecB complex and as an ATP-driven molecular motor driving the stepwise translocation of polypeptide chains across the membrane. The sequence is that of Protein translocase subunit SecA from Rhodopseudomonas palustris (strain BisB5).